Reading from the N-terminus, the 513-residue chain is E3 ubiquitin-protein ligase XBAT33 (513 aa).

5 ANK repeats span residues 44 to 73, 77 to 106, 111 to 140, 171 to 200, and 214 to 244; these read GLNSPLHFAAAKGHNEIVGLLLENGADVNS, CGQTALMQACRYGHWEVVQTLLLFRCNVTR, AGRTALHFAAVNGHARCIRLVLADFLPSDK, GGITALHMAALNGLFDCVQLLLDLEANVSA, and AGSTPLHYAACGGNLKCCQILLARGARKMTL. An RING-type zinc finger spans residues 312-362; sequence CAVCLERTCTVAAEGCEHQLCVRCALYLCSSSNVPSVTVGPPGSIPCPLCR. Disordered stretches follow at residues 397-417 and 455-483; these read DTTDQSSPTCPPTEQRSSKTR and HGTERHSEEHVESSPSRTTTEQEKIEEGQ. Composition is skewed to basic and acidic residues over residues 455–466 and 474–483; these read HGTERHSEEHVE and TEQEKIEEGQ.

The catalysed reaction is S-ubiquitinyl-[E2 ubiquitin-conjugating enzyme]-L-cysteine + [acceptor protein]-L-lysine = [E2 ubiquitin-conjugating enzyme]-L-cysteine + N(6)-ubiquitinyl-[acceptor protein]-L-lysine.. It participates in protein modification; protein ubiquitination. Functionally, possesses E3 ubiquitin-protein ligase activity when associated with the E2 enzyme UBC8 in vitro. The chain is E3 ubiquitin-protein ligase XBAT33 (XBAT33) from Arabidopsis thaliana (Mouse-ear cress).